The chain runs to 301 residues: tRNA pseudouridine synthase B (301 aa).

The active-site Nucleophile is the Asp48.

The protein belongs to the pseudouridine synthase TruB family. Type 1 subfamily.

The catalysed reaction is uridine(55) in tRNA = pseudouridine(55) in tRNA. Responsible for synthesis of pseudouridine from uracil-55 in the psi GC loop of transfer RNAs. The polypeptide is tRNA pseudouridine synthase B (Mycobacterium ulcerans (strain Agy99)).